The following is a 141-amino-acid chain: UPF0102 protein BRADO0179 (141 aa).

The disordered stretch occupies residues 1 to 24 (MAETDRATDKPAGAPKPAKTASPE). Positions 10-19 (KPAGAPKPAK) are enriched in low complexity.

Belongs to the UPF0102 family.

In Bradyrhizobium sp. (strain ORS 278), this protein is UPF0102 protein BRADO0179.